The sequence spans 203 residues: Urease accessory protein UreG (203 aa).

GTP is bound at residue 14–21 (GPVGSGKT).

It belongs to the SIMIBI class G3E GTPase family. UreG subfamily. Homodimer. UreD, UreF and UreG form a complex that acts as a GTP-hydrolysis-dependent molecular chaperone, activating the urease apoprotein by helping to assemble the nickel containing metallocenter of UreC. The UreE protein probably delivers the nickel.

It localises to the cytoplasm. Its function is as follows. Facilitates the functional incorporation of the urease nickel metallocenter. This process requires GTP hydrolysis, probably effectuated by UreG. This Sinorhizobium medicae (strain WSM419) (Ensifer medicae) protein is Urease accessory protein UreG.